The following is a 360-amino-acid chain: Neutral protease 2 homolog SS1G_13741 (360 aa).

An N-linked (GlcNAc...) asparagine glycan is attached at N129. 2 disulfide bridges follow: C189–C261 and C268–C286. Position 311 (H311) interacts with Zn(2+). Residue E312 is part of the active site. Positions 315 and 326 each coordinate Zn(2+).

This sequence belongs to the peptidase M35 family. It depends on Zn(2+) as a cofactor.

Its subcellular location is the secreted. The enzyme catalyses Preferential cleavage of bonds with hydrophobic residues in P1'. Also 3-Asn-|-Gln-4 and 8-Gly-|-Ser-9 bonds in insulin B chain.. Functionally, secreted metalloproteinase that allows assimilation of proteinaceous substrates. Shows high activities on basic nuclear substrates such as histone and protamine. This is Neutral protease 2 homolog SS1G_13741 from Sclerotinia sclerotiorum (strain ATCC 18683 / 1980 / Ss-1) (White mold).